The following is a 339-amino-acid chain: Phenylalanine--tRNA ligase alpha subunit (339 aa).

Position 253 (glutamate 253) interacts with Mg(2+).

It belongs to the class-II aminoacyl-tRNA synthetase family. Phe-tRNA synthetase alpha subunit type 1 subfamily. As to quaternary structure, tetramer of two alpha and two beta subunits. It depends on Mg(2+) as a cofactor.

Its subcellular location is the cytoplasm. The catalysed reaction is tRNA(Phe) + L-phenylalanine + ATP = L-phenylalanyl-tRNA(Phe) + AMP + diphosphate + H(+). The chain is Phenylalanine--tRNA ligase alpha subunit from Geobacter sulfurreducens (strain ATCC 51573 / DSM 12127 / PCA).